We begin with the raw amino-acid sequence, 244 residues long: Membrane-spanning 4-domains subfamily A member 6B (244 aa).

Over 1–46 the chain is Cytoplasmic; that stretch reads MIPQVVTSETVAMISPNGMSLPQTDKPQPFHQWQDSLKKHLKAEIK. Residues 47-67 traverse the membrane as a helical segment; sequence VMAAIQIMCAVMVLSLGIILA. Residues 68 to 84 lie on the Extracellular side of the membrane; the sequence is SVPSNLHFTSVFSVLLK. The helical transmembrane segment at 85–105 threads the bilayer; that stretch reads SGYPFIGALFFIVSGILSIVT. Residues 106–121 lie on the Cytoplasmic side of the membrane; it reads ETKSTKILVDSSLTLN. The chain crosses the membrane as a helical span at residues 122 to 142; it reads ILSVSFAFMGIIIISVSLAGL. Residues 143–176 are Extracellular-facing; sequence HPASEQCLQSKELRPTEYHYYQFLDRNECFAAKS. The helical transmembrane segment at 177–197 threads the bilayer; the sequence is VLAGVFSLMLISTMLELGLAV. Topologically, residues 198–244 are cytoplasmic; it reads LTAMLWWKQSHSNIPGNVMFLPHSSNNDSNMESKVLCNPSYEEQLVC.

The protein belongs to the MS4A family. In terms of tissue distribution, expressed at high levels in thymus, spleen, and peripheral lymph nodes, with less abundant levels in non-lymphoid tissues.

Its subcellular location is the membrane. Its function is as follows. May be involved in signal transduction as a component of a multimeric receptor complex. The protein is Membrane-spanning 4-domains subfamily A member 6B (Ms4a6b) of Mus musculus (Mouse).